We begin with the raw amino-acid sequence, 188 residues long: Peptidyl-tRNA hydrolase (188 aa).

Residue Phe14 coordinates tRNA. The Proton acceptor role is filled by His19. The tRNA site is built by Tyr64, Asn66, and Asn112.

This sequence belongs to the PTH family. In terms of assembly, monomer.

The protein resides in the cytoplasm. The enzyme catalyses an N-acyl-L-alpha-aminoacyl-tRNA + H2O = an N-acyl-L-amino acid + a tRNA + H(+). Functionally, hydrolyzes ribosome-free peptidyl-tRNAs (with 1 or more amino acids incorporated), which drop off the ribosome during protein synthesis, or as a result of ribosome stalling. In terms of biological role, catalyzes the release of premature peptidyl moieties from peptidyl-tRNA molecules trapped in stalled 50S ribosomal subunits, and thus maintains levels of free tRNAs and 50S ribosomes. This is Peptidyl-tRNA hydrolase from Onion yellows phytoplasma (strain OY-M).